The sequence spans 177 residues: Ribosome maturation factor RimM (177 aa).

The PRC barrel domain occupies 98–177 (GEEFYWRELY…RIEVDWDPGF (80 aa)).

This sequence belongs to the RimM family. Binds ribosomal protein uS19.

It localises to the cytoplasm. Functionally, an accessory protein needed during the final step in the assembly of 30S ribosomal subunit, possibly for assembly of the head region. Essential for efficient processing of 16S rRNA. May be needed both before and after RbfA during the maturation of 16S rRNA. It has affinity for free ribosomal 30S subunits but not for 70S ribosomes. This chain is Ribosome maturation factor RimM, found in Photobacterium profundum (strain SS9).